Consider the following 442-residue polypeptide: ATP-dependent protease ATPase subunit HslU (442 aa).

ATP contacts are provided by residues Ile18, 60-65 (GVGKTE), Asp255, Glu320, and Arg392.

It belongs to the ClpX chaperone family. HslU subfamily. As to quaternary structure, a double ring-shaped homohexamer of HslV is capped on each side by a ring-shaped HslU homohexamer. The assembly of the HslU/HslV complex is dependent on binding of ATP.

It localises to the cytoplasm. Functionally, ATPase subunit of a proteasome-like degradation complex; this subunit has chaperone activity. The binding of ATP and its subsequent hydrolysis by HslU are essential for unfolding of protein substrates subsequently hydrolyzed by HslV. HslU recognizes the N-terminal part of its protein substrates and unfolds these before they are guided to HslV for hydrolysis. The polypeptide is ATP-dependent protease ATPase subunit HslU (Hahella chejuensis (strain KCTC 2396)).